The chain runs to 1328 residues: Retrovirus-related Pol polyprotein from transposon TNT 1-94 (1328 aa).

Residues 189–265 (PENQGQALIT…SGQKNDDNTA (77 aa)) are disordered. Positions 217–229 (ARGKSKNRSKSRV) are enriched in basic residues. The CCHC-type zinc-finger motif lies at 230-247 (RNCYNCNQPGHFKRDCPN). Positions 241–253 (FKRDCPNPRKGKG) are enriched in basic and acidic residues. Aspartate 297 (for protease activity) is an active-site residue. Residues 473-642 (SSERKLNILD…IPERVWTNKE (170 aa)) enclose the Integrase catalytic domain. Positions 729–742 (TIPSTSNNPTSAES) are enriched in polar residues. A disordered region spans residues 729-800 (TIPSTSNNPT…RVESRRYPST (72 aa)). The span at 770–798 (EVEHPTQGEEQHQPLRRSERPRVESRRYP) shows a compositional bias: basic and acidic residues.

It carries out the reaction DNA(n) + a 2'-deoxyribonucleoside 5'-triphosphate = DNA(n+1) + diphosphate. This Nicotiana tabacum (Common tobacco) protein is Retrovirus-related Pol polyprotein from transposon TNT 1-94.